Here is a 279-residue protein sequence, read N- to C-terminus: Large ribosomal subunit protein uL2 (279 aa).

Disordered regions lie at residues 1-43 (MGIK…TAGR) and 207-279 (KAGR…PGKH). Positions 8–22 (PTTNGRRNMTASDFS) are enriched in polar residues. Positions 23-33 (EITKTKPEKSL) are enriched in basic and acidic residues. The segment covering 34–43 (LDSQSHTAGR) has biased composition (polar residues). Basic residues-rich tracts occupy residues 209 to 219 (GRTRWQGKRPT) and 254 to 279 (TLGK…PGKH).

The protein belongs to the universal ribosomal protein uL2 family. As to quaternary structure, part of the 50S ribosomal subunit. Forms a bridge to the 30S subunit in the 70S ribosome.

In terms of biological role, one of the primary rRNA binding proteins. Required for association of the 30S and 50S subunits to form the 70S ribosome, for tRNA binding and peptide bond formation. It has been suggested to have peptidyltransferase activity; this is somewhat controversial. Makes several contacts with the 16S rRNA in the 70S ribosome. The chain is Large ribosomal subunit protein uL2 from Lactiplantibacillus plantarum (strain ATCC BAA-793 / NCIMB 8826 / WCFS1) (Lactobacillus plantarum).